We begin with the raw amino-acid sequence, 363 residues long: Phosphoserine aminotransferase (363 aa).

Arginine 42 lines the L-glutamate pocket. Pyridoxal 5'-phosphate is bound by residues 76–77 (GR), tryptophan 102, threonine 156, aspartate 175, and glutamine 198. Lysine 199 is modified (N6-(pyridoxal phosphate)lysine). 240–241 (NT) serves as a coordination point for pyridoxal 5'-phosphate.

Belongs to the class-V pyridoxal-phosphate-dependent aminotransferase family. SerC subfamily. In terms of assembly, homodimer. The cofactor is pyridoxal 5'-phosphate.

It is found in the cytoplasm. It carries out the reaction O-phospho-L-serine + 2-oxoglutarate = 3-phosphooxypyruvate + L-glutamate. The catalysed reaction is 4-(phosphooxy)-L-threonine + 2-oxoglutarate = (R)-3-hydroxy-2-oxo-4-phosphooxybutanoate + L-glutamate. Its pathway is amino-acid biosynthesis; L-serine biosynthesis; L-serine from 3-phospho-D-glycerate: step 2/3. It participates in cofactor biosynthesis; pyridoxine 5'-phosphate biosynthesis; pyridoxine 5'-phosphate from D-erythrose 4-phosphate: step 3/5. Catalyzes the reversible conversion of 3-phosphohydroxypyruvate to phosphoserine and of 3-hydroxy-2-oxo-4-phosphonooxybutanoate to phosphohydroxythreonine. This Shewanella baltica (strain OS195) protein is Phosphoserine aminotransferase.